The chain runs to 74 residues: UPF0057 membrane protein At4g30660 (74 aa).

Transmembrane regions (helical) follow at residues Asn-4–Phe-24 and Leu-37–Phe-57.

Belongs to the UPF0057 (PMP3) family.

The protein resides in the membrane. This Arabidopsis thaliana (Mouse-ear cress) protein is UPF0057 membrane protein At4g30660.